The primary structure comprises 292 residues: MPQHDQLHRYLFENFAVRGELVTVSETLQQILENHDYPQPVKNVLAELLVATSLLTATLKFDGDITVQLQGDGPMNLAVINGNNNQQMRGVARVQGEIPENADLKTLVGNGYVVITITPSEGERYQGVVGLEGDTLAACLEDYFMRSEQLPTRLFIRTGDVDGKPAAGGMLLQVMPAQNAQQDDFDHLATLTETIKTEELLTLPANEVLWRLYHEEEVTVYDPQDVEFKCTCSRERCADALKTLPDEEVDSILTEDGEIDMHCDYCGNHYLFNAMDIAEIRNNASPADPQVH.

Intrachain disulfides connect Cys-230–Cys-232 and Cys-263–Cys-266.

The protein belongs to the HSP33 family. In terms of processing, under oxidizing conditions two disulfide bonds are formed involving the reactive cysteines. Under reducing conditions zinc is bound to the reactive cysteines and the protein is inactive.

The protein resides in the cytoplasm. Its function is as follows. Redox regulated molecular chaperone. Protects both thermally unfolding and oxidatively damaged proteins from irreversible aggregation. Plays an important role in the bacterial defense system toward oxidative stress. The protein is 33 kDa chaperonin of Escherichia coli O17:K52:H18 (strain UMN026 / ExPEC).